Here is a 255-residue protein sequence, read N- to C-terminus: Small ribosomal subunit protein eS1B (255 aa).

Position 2 is an N-acetylalanine; partial (Ala2). Ser245 bears the Phosphoserine mark. Residue Lys248 forms a Glycyl lysine isopeptide (Lys-Gly) (interchain with G-Cter in ubiquitin) linkage. A Phosphothreonine modification is found at Thr254.

Belongs to the eukaryotic ribosomal protein eS1 family. As to quaternary structure, component of the small ribosomal subunit. Mature ribosomes consist of a small (40S) and a large (60S) subunit. The 40S subunit contains about 33 different proteins and 1 molecule of RNA (18S). The 60S subunit contains about 49 different proteins and 3 molecules of RNA (25S, 5.8S and 5S).

It localises to the cytoplasm. In Saccharomyces cerevisiae (strain RM11-1a) (Baker's yeast), this protein is Small ribosomal subunit protein eS1B.